Reading from the N-terminus, the 157-residue chain is Probable succinate transporter subunit YjjB (157 aa).

Transmembrane regions (helical) follow at residues 2-22 (GIIS…IPAV), 55-75 (AGFN…SIGI), 87-107 (IFTV…TAMI), and 129-149 (FLKA…PGLW).

Belongs to the ThrE exporter (TC 2.A.79) family. As to quaternary structure, the transporter is composed of YjjB and YjjP.

The protein resides in the cell inner membrane. In terms of biological role, involved in succinate export with YjjP. Both proteins are required for export. This Klebsiella pneumoniae subsp. pneumoniae (strain ATCC 700721 / MGH 78578) protein is Probable succinate transporter subunit YjjB.